The chain runs to 37 residues: NDGNGRDSDPHDPGDWTTAGQCGLWQPARNSQHWTLV.

Over residues asparagine 1–glycine 14 the composition is skewed to basic and acidic residues. The tract at residues asparagine 1–valine 37 is disordered. Over residues alanine 28–valine 37 the composition is skewed to polar residues.

This sequence belongs to the peptidase S8 family. In terms of assembly, heterodimer of a large and a small chain.

The protein localises to the secreted. This chain is Protease 2 large chain, found in Achromobacter lyticus.